A 228-amino-acid chain; its full sequence is 6-carboxyhexanoate--CoA ligase (228 aa).

It belongs to the BioW family. In terms of assembly, homodimer. The cofactor is Mg(2+).

The catalysed reaction is heptanedioate + ATP + CoA = 6-carboxyhexanoyl-CoA + AMP + diphosphate. Its pathway is metabolic intermediate metabolism; pimeloyl-CoA biosynthesis; pimeloyl-CoA from pimelate: step 1/1. In terms of biological role, catalyzes the transformation of pimelate into pimeloyl-CoA with concomitant hydrolysis of ATP to AMP. The sequence is that of 6-carboxyhexanoate--CoA ligase from Staphylococcus epidermidis (strain ATCC 12228 / FDA PCI 1200).